Consider the following 354-residue polypeptide: MSIQTDDFSAADLPPVKRVMSAAPASPHEEAIERALRPKLFDEYVGQAKVREQLEIFIGAAKKRSEALDHVLLFGPPGLGKTTLSHIIAHELGVNLRQTSGPVLEKPKDLAALLTNLEKNDVLFIDEIHRLSPVVEEILYPALEDYQIDIMIGEGPAARSIKLDLQPFTLVGATTRAGMLTNPLRDRFGIVARLEFYTAEELGRIVRRSASLLNAPMDEEGGFEIARRSRGTPRIANRLLRRVRDYADVKGTGQITLDIANKALAMLDVDPQGFDVMDRKLLEAVIHRFDGGPVGLDNIAASIGEERDTIEDVIEPYLIQQGYLQRTPRGRIATLAAYRHLGVAPPVSGNDMFT.

The interval 5–197 (TDDFSAADLP…FGIVARLEFY (193 aa)) is large ATPase domain (RuvB-L). ATP-binding positions include Leu-36, Arg-37, Gly-78, Lys-81, Thr-82, Thr-83, 144-146 (EDY), Arg-187, Tyr-197, and Arg-234. Thr-82 contributes to the Mg(2+) binding site. Residues 198–268 (TAEELGRIVR…IANKALAMLD (71 aa)) form a small ATPAse domain (RuvB-S) region. The interval 271–354 (PQGFDVMDRK…PPVSGNDMFT (84 aa)) is head domain (RuvB-H). DNA-binding residues include Arg-307, Arg-326, and Arg-331.

Belongs to the RuvB family. In terms of assembly, homohexamer. Forms an RuvA(8)-RuvB(12)-Holliday junction (HJ) complex. HJ DNA is sandwiched between 2 RuvA tetramers; dsDNA enters through RuvA and exits via RuvB. An RuvB hexamer assembles on each DNA strand where it exits the tetramer. Each RuvB hexamer is contacted by two RuvA subunits (via domain III) on 2 adjacent RuvB subunits; this complex drives branch migration. In the full resolvosome a probable DNA-RuvA(4)-RuvB(12)-RuvC(2) complex forms which resolves the HJ.

The protein resides in the cytoplasm. It carries out the reaction ATP + H2O = ADP + phosphate + H(+). Functionally, the RuvA-RuvB-RuvC complex processes Holliday junction (HJ) DNA during genetic recombination and DNA repair, while the RuvA-RuvB complex plays an important role in the rescue of blocked DNA replication forks via replication fork reversal (RFR). RuvA specifically binds to HJ cruciform DNA, conferring on it an open structure. The RuvB hexamer acts as an ATP-dependent pump, pulling dsDNA into and through the RuvAB complex. RuvB forms 2 homohexamers on either side of HJ DNA bound by 1 or 2 RuvA tetramers; 4 subunits per hexamer contact DNA at a time. Coordinated motions by a converter formed by DNA-disengaged RuvB subunits stimulates ATP hydrolysis and nucleotide exchange. Immobilization of the converter enables RuvB to convert the ATP-contained energy into a lever motion, pulling 2 nucleotides of DNA out of the RuvA tetramer per ATP hydrolyzed, thus driving DNA branch migration. The RuvB motors rotate together with the DNA substrate, which together with the progressing nucleotide cycle form the mechanistic basis for DNA recombination by continuous HJ branch migration. Branch migration allows RuvC to scan DNA until it finds its consensus sequence, where it cleaves and resolves cruciform DNA. The sequence is that of Holliday junction branch migration complex subunit RuvB from Polaromonas sp. (strain JS666 / ATCC BAA-500).